Reading from the N-terminus, the 295-residue chain is GDP-polyphosphate phosphotransferase (295 aa).

Positions 1-28 are disordered; sequence MDIPSVDVSTATNDGASSRAKGHRSAAP. The span at 7-16 shows a compositional bias: polar residues; that stretch reads DVSTATNDGA. His115 and His247 each carry phosphohistidine.

Belongs to the polyphosphate kinase 2 (PPK2) family. Class I subfamily. Interacts with Ndk. Post-translationally, autophosphorylated at His-115 and His-247 using polyP as a phosphate donor.

It catalyses the reaction [phosphate](n) + GTP = [phosphate](n+1) + GDP. Functionally, uses inorganic polyphosphate (polyP) as a donor to convert GDP to GTP. In addition, modulates nucleotide triphosphate synthesis catalyzed by the nucleoside diphosphate kinase (Ndk) in favor of GTP production over CTP or UTP. Plays an important role in survival of M.tuberculosis in macrophages. This Mycobacterium tuberculosis (strain ATCC 25618 / H37Rv) protein is GDP-polyphosphate phosphotransferase.